Reading from the N-terminus, the 110-residue chain is Ribonuclease P protein component 1 (110 aa).

It belongs to the eukaryotic/archaeal RNase P protein component 1 family. As to quaternary structure, consists of a catalytic RNA component and at least 4-5 protein subunits.

The protein resides in the cytoplasm. The enzyme catalyses Endonucleolytic cleavage of RNA, removing 5'-extranucleotides from tRNA precursor.. Part of ribonuclease P, a protein complex that generates mature tRNA molecules by cleaving their 5'-ends. The protein is Ribonuclease P protein component 1 of Methanosarcina mazei (strain ATCC BAA-159 / DSM 3647 / Goe1 / Go1 / JCM 11833 / OCM 88) (Methanosarcina frisia).